A 415-amino-acid chain; its full sequence is Polyketide biosynthesis malonyl-ACP decarboxylase PksF (415 aa).

The Ketosynthase family 3 (KS3) domain maps to leucine 6–asparagine 407.

It belongs to the thiolase-like superfamily. Beta-ketoacyl-ACP synthases family.

Its subcellular location is the cytoplasm. The enzyme catalyses malonyl-[ACP] + H(+) = acetyl-[ACP] + CO2. It functions in the pathway antibiotic biosynthesis; bacillaene biosynthesis. Its function is as follows. Involved in some intermediate steps for the synthesis of the antibiotic polyketide bacillaene which is involved in secondary metabolism. It decarboxylates selectively the malonyl group attached on the acyl-carrier-protein AcpK (Mal-AcpK). This chain is Polyketide biosynthesis malonyl-ACP decarboxylase PksF (pksF), found in Bacillus subtilis (strain 168).